The following is a 365-amino-acid chain: Aminomethyltransferase (365 aa).

It belongs to the GcvT family. The glycine cleavage system is composed of four proteins: P, T, L and H.

The catalysed reaction is N(6)-[(R)-S(8)-aminomethyldihydrolipoyl]-L-lysyl-[protein] + (6S)-5,6,7,8-tetrahydrofolate = N(6)-[(R)-dihydrolipoyl]-L-lysyl-[protein] + (6R)-5,10-methylene-5,6,7,8-tetrahydrofolate + NH4(+). In terms of biological role, the glycine cleavage system catalyzes the degradation of glycine. This chain is Aminomethyltransferase, found in Yersinia pseudotuberculosis serotype O:3 (strain YPIII).